The following is a 443-amino-acid chain: 3-phosphoshikimate 1-carboxyvinyltransferase (443 aa).

The 3-phosphoshikimate site is built by Lys25, Ser26, and Arg30. Lys25 serves as a coordination point for phosphoenolpyruvate. 2 residues coordinate phosphoenolpyruvate: Gly117 and Arg145. Positions 188, 189, 190, 217, 331, and 358 each coordinate 3-phosphoshikimate. Position 190 (Gln190) interacts with phosphoenolpyruvate. The active-site Proton acceptor is the Glu331. Residues Arg362, Arg404, and Lys428 each coordinate phosphoenolpyruvate.

Belongs to the EPSP synthase family. As to quaternary structure, monomer.

The protein localises to the cytoplasm. It catalyses the reaction 3-phosphoshikimate + phosphoenolpyruvate = 5-O-(1-carboxyvinyl)-3-phosphoshikimate + phosphate. It functions in the pathway metabolic intermediate biosynthesis; chorismate biosynthesis; chorismate from D-erythrose 4-phosphate and phosphoenolpyruvate: step 6/7. Functionally, catalyzes the transfer of the enolpyruvyl moiety of phosphoenolpyruvate (PEP) to the 5-hydroxyl of shikimate-3-phosphate (S3P) to produce enolpyruvyl shikimate-3-phosphate and inorganic phosphate. The chain is 3-phosphoshikimate 1-carboxyvinyltransferase from Tropheryma whipplei (strain TW08/27) (Whipple's bacillus).